We begin with the raw amino-acid sequence, 97 residues long: Putative septation protein SpoVG (97 aa).

It belongs to the SpoVG family.

Essential for sporulation. Interferes with or is a negative regulator of the pathway leading to asymmetric septation. The protein is Putative septation protein SpoVG of Bacillus velezensis (strain DSM 23117 / BGSC 10A6 / LMG 26770 / FZB42) (Bacillus amyloliquefaciens subsp. plantarum).